Reading from the N-terminus, the 185-residue chain is Large ribosomal subunit protein uL5 (185 aa).

It belongs to the universal ribosomal protein uL5 family. As to quaternary structure, part of the 50S ribosomal subunit; part of the 5S rRNA/L5/L18/L25 subcomplex. Contacts the 5S rRNA and the P site tRNA. Forms a bridge to the 30S subunit in the 70S ribosome.

In terms of biological role, this is one of the proteins that bind and probably mediate the attachment of the 5S RNA into the large ribosomal subunit, where it forms part of the central protuberance. In the 70S ribosome it contacts protein S13 of the 30S subunit (bridge B1b), connecting the 2 subunits; this bridge is implicated in subunit movement. Contacts the P site tRNA; the 5S rRNA and some of its associated proteins might help stabilize positioning of ribosome-bound tRNAs. This Parvibaculum lavamentivorans (strain DS-1 / DSM 13023 / NCIMB 13966) protein is Large ribosomal subunit protein uL5.